Here is a 549-residue protein sequence, read N- to C-terminus: Eukaryotic translation initiation factor 3 subunit D (549 aa).

The segment at 101 to 130 (QSYQRGRARGQRGRGARGARTPGGMTTLNK) is disordered. Over residues 106–117 (GRARGQRGRGAR) the composition is skewed to basic residues. An RNA gate region spans residues 277-291 (EFDLLTVNETSVEPP). Residues 521–549 (ESDASEESGDEQADTPFAPLYSYGNSKRV) are disordered. The span at 523 to 533 (DASEESGDEQA) shows a compositional bias: acidic residues.

Belongs to the eIF-3 subunit D family. As to quaternary structure, component of the eukaryotic translation initiation factor 3 (eIF-3) complex.

The protein resides in the cytoplasm. In terms of biological role, mRNA cap-binding component of the eukaryotic translation initiation factor 3 (eIF-3) complex, which is involved in protein synthesis of a specialized repertoire of mRNAs and, together with other initiation factors, stimulates binding of mRNA and methionyl-tRNAi to the 40S ribosome. The eIF-3 complex specifically targets and initiates translation of a subset of mRNAs involved in cell proliferation. In the eIF-3 complex, eif3d specifically recognizes and binds the 7-methylguanosine cap of a subset of mRNAs. This is Eukaryotic translation initiation factor 3 subunit D from Bombyx mori (Silk moth).